We begin with the raw amino-acid sequence, 496 residues long: NADP-dependent glyceraldehyde-3-phosphate dehydrogenase (496 aa).

A2 carries the post-translational modification N-acetylalanine. Position 4 is a phosphothreonine (T4). Residues R116 and 169–170 contribute to the substrate site; that span reads NY. K192, T195, and D230 together coordinate NADP(+). 245–249 serves as a coordination point for NAD(+); the sequence is GGDTG. The Proton acceptor role is filled by E264. Residue 297 to 299 coordinates substrate; sequence RCT. C298 acts as the Nucleophile in catalysis. NADP(+) is bound at residue E391. R451 lines the substrate pocket.

This sequence belongs to the aldehyde dehydrogenase family.

The protein resides in the cytoplasm. The enzyme catalyses D-glyceraldehyde 3-phosphate + NADP(+) + H2O = (2R)-3-phosphoglycerate + NADPH + 2 H(+). Functionally, important as a means of generating NADPH for biosynthetic reactions. This Arabidopsis thaliana (Mouse-ear cress) protein is NADP-dependent glyceraldehyde-3-phosphate dehydrogenase (ALDH11A3).